A 413-amino-acid chain; its full sequence is Multifunctional CCA protein (413 aa).

ATP contacts are provided by glycine 8 and arginine 11. Glycine 8 and arginine 11 together coordinate CTP. Mg(2+) contacts are provided by aspartate 21 and aspartate 23. Residues arginine 91, arginine 143, and arginine 146 each coordinate ATP. Positions 91, 143, and 146 each coordinate CTP. Residues 232–333 (TGVHVMMVVD…VRFFERSDAL (102 aa)) enclose the HD domain.

The protein belongs to the tRNA nucleotidyltransferase/poly(A) polymerase family. Bacterial CCA-adding enzyme type 1 subfamily. As to quaternary structure, monomer. Can also form homodimers and oligomers. Mg(2+) serves as cofactor. Ni(2+) is required as a cofactor.

It catalyses the reaction a tRNA precursor + 2 CTP + ATP = a tRNA with a 3' CCA end + 3 diphosphate. The catalysed reaction is a tRNA with a 3' CCA end + 2 CTP + ATP = a tRNA with a 3' CCACCA end + 3 diphosphate. Functionally, catalyzes the addition and repair of the essential 3'-terminal CCA sequence in tRNAs without using a nucleic acid template. Adds these three nucleotides in the order of C, C, and A to the tRNA nucleotide-73, using CTP and ATP as substrates and producing inorganic pyrophosphate. tRNA 3'-terminal CCA addition is required both for tRNA processing and repair. Also involved in tRNA surveillance by mediating tandem CCA addition to generate a CCACCA at the 3' terminus of unstable tRNAs. While stable tRNAs receive only 3'-terminal CCA, unstable tRNAs are marked with CCACCA and rapidly degraded. The sequence is that of Multifunctional CCA protein from Burkholderia ambifaria (strain MC40-6).